We begin with the raw amino-acid sequence, 977 residues long: Short transient receptor potential channel 4 (977 aa).

Residues 1–324 are Cytoplasmic-facing; the sequence is MAQFYYKRNV…YDEFPGWRRR (324 aa). ANK repeat units follow at residues 29–60, 71–93, 96–118, and 141–165; these read LSPS…IYFK, RTAL…LSFN, VGDA…LLNH, and PDIT…VQKG. Residues His172, Cys176, Cys178, and Cys181 each contribute to the Zn(2+) site. A coiled-coil region spans residues 223–260; it reads LSWELQELSKVENEFKSEYEELSRQCKQFAKDLLDQTR. Positions 325-359 form an intramembrane region, discontinuously helical; it reads HWAVKMVTCFIIGLLFPVFSVCYLIAPKSPLGLFI. The Cytoplasmic segment spans residues 360-362; the sequence is RKP. The chain crosses the membrane as a helical span at residues 363–383; the sequence is FIKFICHTASYLTFLFLLLLA. Residues 384-403 are Extracellular-facing; that stretch reads SQHIDRSDLNRQGPPPTIVE. Residues 404–418 traverse the membrane as a helical segment; it reads WMILPWVLGFIWGEI. 4 residues coordinate Ca(2+): Glu417, Gln420, Asn435, and Asp438. Over 419 to 432 the chain is Cytoplasmic; that stretch reads KQMWDGGLQDYIHD. Residues 433-453 traverse the membrane as a helical segment; the sequence is WWNLMDFVMNSLYLATISLKI. Topologically, residues 454–475 are extracellular; the sequence is VAFVKYSALNPRESWDMWHPTL. The chain crosses the membrane as a helical span at residues 476–498; the sequence is VAEALFAIANIFSSLRLISLFTA. Residues 499–511 lie on the Cytoplasmic side of the membrane; the sequence is NSHLGPLQISLGR. A helical transmembrane segment spans residues 512–534; the sequence is MLLDILKFLFIYCLVLLAFANGL. The Extracellular portion of the chain corresponds to 535–599; it reads NQLYFYYEET…HEFTEFVGAT (65 aa). A disulfide bridge links Cys549 with Cys554. A helical transmembrane segment spans residues 600–620; that stretch reads MFGTYNVISLVVLLNMLIAMM. An interaction with ITPR1, ITPR2 and ITPR3 region spans residues 615 to 977; the sequence is MLIAMMNNSY…THEDYVTTRL (363 aa). Residues 621–977 are Cytoplasmic-facing; that stretch reads NNSYQLIADH…THEDYVTTRL (357 aa). The segment at 762 to 790 is disordered; the sequence is IQSANASKESSNSADSDEKSDSEGNSKDK. A compositionally biased stretch (low complexity) spans 764–775; it reads SANASKESSNSA. Residues 777 to 788 show a composition bias toward basic and acidic residues; it reads SDEKSDSEGNSK. Phosphotyrosine; by FYN occurs at positions 959 and 972. The segment at 975 to 977 is PDZ-binding domain; it reads TRL.

It belongs to the transient receptor (TC 1.A.4) family. STrpC subfamily. TRPC4 sub-subfamily. In terms of assembly, homotetramer. Heterotetramer with TRPC1 and/or TRPC5. Forms a heteromeric ion channel with TRPC1, with a 1:3 TRPC1:TRPC4 stoichiometry. Interacts with TRPC4AP. Isoform alpha but not isoform beta interacts with ITPR1, ITPR2 and ITPR3. Interacts with (via PDZ-binding domain) with NHERF1. Interacts with MX1 and RNF24. Interacts (via CIRB domain) with SESTD1 (via spectrin 1 repeat). Interacts with CDH5 and CTNNB1. Interacts with SPTAN1 (via C-terminal spectrin repeats) and SPTBN5 (via C-terminus). Interacts (via protein 4.1-binding domain) with EPB41L2. Interacts with PLSCR1. Phosphorylation modulates TRPC channel function by regulating the level of TRPC4 at the cell surface and by increasing the association with NHERF1. Strongly expressed in placenta. Expressed at lower levels in heart, pancreas, kidney and brain. Expressed in endothelial cells. Isoform alpha was found to be the predominant isoform. Isoform beta was not found in pancreas and brain.

It localises to the cell membrane. It catalyses the reaction Ca(2+)(in) = Ca(2+)(out). It carries out the reaction Na(+)(in) = Na(+)(out). The enzyme catalyses Li(+)(in) = Li(+)(out). The catalysed reaction is Cs(+)(in) = Cs(+)(out). With respect to regulation, may be operated by a phosphatidylinositol second messenger system activated by receptor tyrosine kinases or G-protein coupled receptors. May be activated by intracellular calcium store depletion. Inhibited by xanthine-based inhibitor Pico145. In terms of biological role, forms a receptor-activated non-selective calcium permeant cation channel. Acts as a cell-cell contact-dependent endothelial calcium entry channel. Forms a homomeric ion channel or a heteromeric ion channel with TRPC1; the heteromeric ion channel has reduced calcium permeability compared to the homomeric channel. Also permeable to monovalent ions including sodium, lithium and cesium ions. Its function is as follows. Forms a receptor-activated non-selective calcium permeant cation channel. The protein is Short transient receptor potential channel 4 (TRPC4) of Homo sapiens (Human).